Consider the following 417-residue polypeptide: Serine hydroxymethyltransferase (417 aa).

(6S)-5,6,7,8-tetrahydrofolate is bound by residues Leu-121 and 125 to 127 (GHL). N6-(pyridoxal phosphate)lysine is present on Lys-229. Position 355-357 (355-357 (SPF)) interacts with (6S)-5,6,7,8-tetrahydrofolate.

This sequence belongs to the SHMT family. In terms of assembly, homodimer. Pyridoxal 5'-phosphate is required as a cofactor.

The protein resides in the cytoplasm. The catalysed reaction is (6R)-5,10-methylene-5,6,7,8-tetrahydrofolate + glycine + H2O = (6S)-5,6,7,8-tetrahydrofolate + L-serine. It participates in one-carbon metabolism; tetrahydrofolate interconversion. It functions in the pathway amino-acid biosynthesis; glycine biosynthesis; glycine from L-serine: step 1/1. Catalyzes the reversible interconversion of serine and glycine with tetrahydrofolate (THF) serving as the one-carbon carrier. This reaction serves as the major source of one-carbon groups required for the biosynthesis of purines, thymidylate, methionine, and other important biomolecules. Also exhibits THF-independent aldolase activity toward beta-hydroxyamino acids, producing glycine and aldehydes, via a retro-aldol mechanism. The sequence is that of Serine hydroxymethyltransferase from Shewanella amazonensis (strain ATCC BAA-1098 / SB2B).